The primary structure comprises 555 residues: Urocanate hydratase (555 aa).

NAD(+)-binding positions include 52 to 53, glutamine 130, 176 to 178, glutamate 196, arginine 201, 242 to 243, 263 to 267, 273 to 274, and tyrosine 322; these read GG, GMG, NA, QTSAH, and YL. Cysteine 410 is an active-site residue. Glycine 492 is an NAD(+) binding site.

It belongs to the urocanase family. The cofactor is NAD(+).

It is found in the cytoplasm. The enzyme catalyses 4-imidazolone-5-propanoate = trans-urocanate + H2O. Its pathway is amino-acid degradation; L-histidine degradation into L-glutamate; N-formimidoyl-L-glutamate from L-histidine: step 2/3. Its function is as follows. Catalyzes the conversion of urocanate to 4-imidazolone-5-propionate. This Shewanella baltica (strain OS223) protein is Urocanate hydratase.